The chain runs to 233 residues: Phosphonates import ATP-binding protein PhnC 1 (233 aa).

Positions 2–227 (LSVSGLTKRY…PAAALDREDI (226 aa)) constitute an ABC transporter domain. ATP is bound at residue 34 to 41 (GRSGAGKT).

This sequence belongs to the ABC transporter superfamily. Phosphonates importer (TC 3.A.1.9.1) family. In terms of assembly, the complex is composed of two ATP-binding proteins (PhnC), two transmembrane proteins (PhnE) and a solute-binding protein (PhnD).

It localises to the cell membrane. The enzyme catalyses phosphonate(out) + ATP + H2O = phosphonate(in) + ADP + phosphate + H(+). Its function is as follows. Part of the ABC transporter complex PhnCDE involved in phosphonates import. Responsible for energy coupling to the transport system. In Natronomonas pharaonis (strain ATCC 35678 / DSM 2160 / CIP 103997 / JCM 8858 / NBRC 14720 / NCIMB 2260 / Gabara) (Halobacterium pharaonis), this protein is Phosphonates import ATP-binding protein PhnC 1.